Reading from the N-terminus, the 290-residue chain is 4-hydroxybenzoate octaprenyltransferase (290 aa).

8 helical membrane passes run 23–43, 46–66, 99–119, 141–161, 163–183, 212–232, 233–253, and 268–288; these read IGAL…TPGM, LWIL…GCVV, LFVV…AMTI, LPQV…FAAV, ESLP…AVAY, TLII…IGWL, NGLG…FVYQ, and AFMN…MSYW.

This sequence belongs to the UbiA prenyltransferase family. Requires Mg(2+) as cofactor.

The protein resides in the cell inner membrane. It catalyses the reaction all-trans-octaprenyl diphosphate + 4-hydroxybenzoate = 4-hydroxy-3-(all-trans-octaprenyl)benzoate + diphosphate. It functions in the pathway cofactor biosynthesis; ubiquinone biosynthesis. Catalyzes the prenylation of para-hydroxybenzoate (PHB) with an all-trans polyprenyl group. Mediates the second step in the final reaction sequence of ubiquinone-8 (UQ-8) biosynthesis, which is the condensation of the polyisoprenoid side chain with PHB, generating the first membrane-bound Q intermediate 3-octaprenyl-4-hydroxybenzoate. In Salmonella paratyphi C (strain RKS4594), this protein is 4-hydroxybenzoate octaprenyltransferase.